Consider the following 224-residue polypeptide: Probable C-&gt;U-editing enzyme APOBEC-2 (224 aa).

The disordered stretch occupies residues 1-25 (MAQKEEAAAAAEPASQNGEEVENLE). Residues Glu60 and His98 each coordinate Zn(2+). The CMP/dCMP-type deaminase domain occupies 64 to 169 (GRNKTFLCYV…PEIQAALRKL (106 aa)). The active-site Proton donor is the Glu100. Residues Cys128 and Cys131 each contribute to the Zn(2+) site.

It belongs to the cytidine and deoxycytidylate deaminase family. As to quaternary structure, homotetramer. Zn(2+) is required as a cofactor.

It carries out the reaction cytidine(6666) in apoB mRNA + H2O + H(+) = uridine(6666) in apoB mRNA + NH4(+). In terms of biological role, probable C to U editing enzyme whose physiological substrate is not yet known. Does not display detectable apoB mRNA editing. Has a low intrinsic cytidine deaminase activity. May play a role in the epigenetic regulation of gene expression through the process of active DNA demethylation. In Bos taurus (Bovine), this protein is Probable C-&gt;U-editing enzyme APOBEC-2 (APOBEC2).